An 856-amino-acid chain; its full sequence is Mechanosensitive ion channel protein 6 (856 aa).

2 disordered regions span residues 45–86 and 116–226; these read GEGN…DPPT and RGLT…PFAA. 2 stretches are compositionally biased toward basic and acidic residues: residues 70 to 85 and 129 to 140; these read QQKD…EDPP and TKRDPVGRRDSR. Residues 155-168 are compositionally biased toward polar residues; that stretch reads SGNNAPIQRSSSTL. S211 carries the post-translational modification Phosphoserine. A compositionally biased stretch (acidic residues) spans 217–226; it reads EEEEDDPFAA. The next 4 membrane-spanning stretches (helical) occupy residues 242 to 262, 283 to 303, 323 to 343, and 360 to 380; these read IVLE…TLAI, LVLI…VFFI, AVQN…LFDE, and IFVC…LVKV. S462 carries the phosphoserine modification. A run of 2 helical transmembrane segments spans residues 615–635 and 651–671; these read MVNI…LGIT and AFIF…LFVI.

Belongs to the MscS (TC 1.A.23) family.

The protein localises to the membrane. Its function is as follows. Mechanosensitive channel that opens in response to stretch forces in the membrane lipid bilayer. This is Mechanosensitive ion channel protein 6 (MSL6) from Arabidopsis thaliana (Mouse-ear cress).